The sequence spans 263 residues: HTH-type transcriptional repressor NanR (263 aa).

Residues 1–23 form a disordered region; sequence MSPMNAFDPQAEDSTTTIGRNLR. The region spanning 30–98 is the HTH gntR-type domain; sequence KKLSEMVEEE…NGERARVSRP (69 aa). The segment at residues 58–77 is a DNA-binding region (H-T-H motif); that stretch reads ERELMAFFNVGRPSVREALA.

Belongs to the NanR family.

Functionally, transcriptional repressor that controls expression of the genes required for the catabolism of sialic acids. This chain is HTH-type transcriptional repressor NanR, found in Escherichia coli O45:K1 (strain S88 / ExPEC).